A 237-amino-acid polypeptide reads, in one-letter code: Lectin ConGF (237 aa).

Positions 8 and 10 each coordinate Mn(2+). Ca(2+) is bound by residues Asp-10, Tyr-12, Asn-14, and Asp-19. An a carbohydrate-binding site is contributed by Asn-14. Mn(2+) contacts are provided by Asp-19 and His-24. A carbohydrate-binding residues include Leu-99, Tyr-100, Asp-208, and Arg-228.

This sequence belongs to the leguminous lectin family. Homotetramer; dimer of dimers. In terms of processing, concanavalin A-like lectins of the Diocleinae subtribe undergo proteolytic processing referred to as circular permutation. The propeptide is split into an N-terminal and a C-terminal part, the gamma and beta chain, respectively. These are then religated in beta-gamma order to form the mature alpha chain. The beta and gamma chains can often be detected in cell extracts. Residues 1-118 of the mature chain, as displayed here, probably constitute the beta chain in the propeptide, residues 119-237 the gamma chain.

In terms of biological role, lectin. Induces paw edema in mice. Has a weak vasorelaxant effect on rat aorta. Has anti-inflammatory and anti-nociceptive effects. The polypeptide is Lectin ConGF (Canavalia grandiflora (Jackbean)).